Here is a 404-residue protein sequence, read N- to C-terminus: 1-deoxy-D-xylulose 5-phosphate reductoisomerase (404 aa).

Positions 10, 11, 12, 13, 36, 37, 38, and 124 each coordinate NADPH. Residue Lys125 participates in 1-deoxy-D-xylulose 5-phosphate binding. Glu126 provides a ligand contact to NADPH. Asp150 is a binding site for Mn(2+). Ser151, Glu152, Ser186, and His209 together coordinate 1-deoxy-D-xylulose 5-phosphate. Glu152 lines the Mn(2+) pocket. Gly215 provides a ligand contact to NADPH. Residues Ser222, Asn227, Lys228, and Glu231 each coordinate 1-deoxy-D-xylulose 5-phosphate. A Mn(2+)-binding site is contributed by Glu231.

Belongs to the DXR family. In terms of assembly, homodimer. It depends on Mg(2+) as a cofactor. Mn(2+) is required as a cofactor.

It carries out the reaction 2-C-methyl-D-erythritol 4-phosphate + NADP(+) = 1-deoxy-D-xylulose 5-phosphate + NADPH + H(+). Its pathway is isoprenoid biosynthesis; isopentenyl diphosphate biosynthesis via DXP pathway; isopentenyl diphosphate from 1-deoxy-D-xylulose 5-phosphate: step 1/6. In terms of biological role, catalyzes the NADPH-dependent rearrangement and reduction of 1-deoxy-D-xylulose-5-phosphate (DXP) to 2-C-methyl-D-erythritol 4-phosphate (MEP). This is 1-deoxy-D-xylulose 5-phosphate reductoisomerase from Erwinia tasmaniensis (strain DSM 17950 / CFBP 7177 / CIP 109463 / NCPPB 4357 / Et1/99).